A 154-amino-acid polypeptide reads, in one-letter code: MAKIILRHLIETPVRYQEEFEARGLEDCRLDHTLYALPGPTIEDLSKARGAGTPQALAEDSASTEKPPGEGKSRFQILLDVVQFLPEDIIIQTFEGWLLIKAQHGTRMDEHGFISRSFTRQYKLPDGVETKDLSAILCHDGILVVEVKDSLGTK.

Residues 48–71 (ARGAGTPQALAEDSASTEKPPGEG) form a disordered region. Positions 57-154 (LAEDSASTEK…VEVKDSLGTK (98 aa)) constitute a sHSP domain.

Belongs to the small heat shock protein (HSP20) family.

The protein localises to the cytoplasm. Its subcellular location is the nucleus. In terms of biological role, inhibitor of actin polymerization. This is Heat shock protein beta-3 (Hspb3) from Mus musculus (Mouse).